We begin with the raw amino-acid sequence, 454 residues long: Na(+)/H(+) antiporter NhaA (454 aa).

A run of 10 helical transmembrane segments spans residues 22–42 (ISGL…NLPF), 64–84 (MGLG…TVGL), 106–126 (LCAV…ISLF), 150–170 (GWAV…ALFA), 190–210 (LLAI…YWFL), 228–248 (VPWL…FEAG), 284–304 (PFSA…VHFE), 306–326 (LTLA…LVVG), 355–375 (MFPA…IASL), and 386–406 (ARFG…ILLS).

It belongs to the NhaA Na(+)/H(+) (TC 2.A.33) antiporter family.

The protein resides in the cell membrane. The enzyme catalyses Na(+)(in) + 2 H(+)(out) = Na(+)(out) + 2 H(+)(in). Its function is as follows. Na(+)/H(+) antiporter that extrudes sodium in exchange for external protons. The protein is Na(+)/H(+) antiporter NhaA of Bifidobacterium adolescentis (strain ATCC 15703 / DSM 20083 / NCTC 11814 / E194a).